Reading from the N-terminus, the 142-residue chain is Large ribosomal subunit protein uL11 (142 aa).

This sequence belongs to the universal ribosomal protein uL11 family. Part of the ribosomal stalk of the 50S ribosomal subunit. Interacts with L10 and the large rRNA to form the base of the stalk. L10 forms an elongated spine to which L12 dimers bind in a sequential fashion forming a multimeric L10(L12)X complex. Post-translationally, one or more lysine residues are methylated.

Its function is as follows. Forms part of the ribosomal stalk which helps the ribosome interact with GTP-bound translation factors. This is Large ribosomal subunit protein uL11 from Afipia carboxidovorans (strain ATCC 49405 / DSM 1227 / KCTC 32145 / OM5) (Oligotropha carboxidovorans).